The chain runs to 274 residues: Cytochrome b-c1 complex subunit Rieske, mitochondrial (274 aa).

At 79–103 (SHTDVKVPDFYDYRRLEVLDSTKSS) the chain is on the mitochondrial matrix side. The helical transmembrane segment at 104 to 140 (RESSEARKGFSYLVTAVTTVGVAYAAKNAVTQFISSM) threads the bilayer. Residues 141–274 (SASADVLAMA…FTSDDMVVVG (134 aa)) are Mitochondrial intermembrane-facing. The region spanning 187-272 (EAAVELSQLR…YEFTSDDMVV (86 aa)) is the Rieske domain. [2Fe-2S] cluster contacts are provided by Cys-217, His-219, Cys-236, His-239, and Ser-241. An intrachain disulfide couples Cys-222 to Cys-238.

It belongs to the Rieske iron-sulfur protein family. Component of the ubiquinol-cytochrome c oxidoreductase (cytochrome b-c1 complex, complex III, CIII), a multisubunit enzyme composed of 11 subunits. The complex is composed of 3 respiratory subunits cytochrome b, cytochrome c1 and Rieske protein UQCRFS1, 2 core protein subunits UQCRC1/QCR1 and UQCRC2/QCR2, and 6 low-molecular weight protein subunits UQCRH/QCR6, UQCRB/QCR7, UQCRQ/QCR8, UQCR10/QCR9, UQCR11/QCR10 and subunit 9, the cleavage product of Rieske protein UQCRFS1. The complex exists as an obligatory dimer and forms supercomplexes (SCs) in the inner mitochondrial membrane with NADH-ubiquinone oxidoreductase (complex I, CI) and cytochrome c oxidase (complex IV, CIV), resulting in different assemblies (supercomplex SCI(1)III(2)IV(1) and megacomplex MCI(2)III(2)IV(2)). Incorporation of the Rieske protein UQCRFS1 is the penultimate step in complex III assembly. Interacts with TTC19, which is involved in the clearance of UQCRFS1 fragments. In terms of assembly, component of the ubiquinol-cytochrome c oxidoreductase (cytochrome b-c1 complex, complex III, CIII). Subunit 9 corresponds to the mitochondrial targeting sequence (MTS) of Rieske protein UQCRFS1. It is retained after processing and incorporated inside complex III, where it remains bound to the complex and localizes between the 2 core subunits UQCRC1/QCR1 and UQCRC2/QCR2. [2Fe-2S] cluster serves as cofactor. Proteolytic processing is necessary for the correct insertion of UQCRFS1 in the complex III dimer. Several fragments are generated during UQCRFS1 insertion, most probably due to the endogenous matrix-processing peptidase (MPP) activity of the 2 core protein subunits UQCRC1/QCR1 and UQCRC2/QCR2, which are homologous to the 2 mitochondrial-processing peptidase (MPP) subunits beta-MPP and alpha-MPP respectively. The action of the protease is also necessary for the clearance of the UQCRFS1 fragments.

The protein localises to the mitochondrion inner membrane. It carries out the reaction a quinol + 2 Fe(III)-[cytochrome c](out) = a quinone + 2 Fe(II)-[cytochrome c](out) + 2 H(+)(out). In terms of biological role, component of the ubiquinol-cytochrome c oxidoreductase, a multisubunit transmembrane complex that is part of the mitochondrial electron transport chain which drives oxidative phosphorylation. The respiratory chain contains 3 multisubunit complexes succinate dehydrogenase (complex II, CII), ubiquinol-cytochrome c oxidoreductase (cytochrome b-c1 complex, complex III, CIII) and cytochrome c oxidase (complex IV, CIV), that cooperate to transfer electrons derived from NADH and succinate to molecular oxygen, creating an electrochemical gradient over the inner membrane that drives transmembrane transport and the ATP synthase. The cytochrome b-c1 complex catalyzes electron transfer from ubiquinol to cytochrome c, linking this redox reaction to translocation of protons across the mitochondrial inner membrane, with protons being carried across the membrane as hydrogens on the quinol. In the process called Q cycle, 2 protons are consumed from the matrix, 4 protons are released into the intermembrane space and 2 electrons are passed to cytochrome c. The Rieske protein is a catalytic core subunit containing a [2Fe-2S] iron-sulfur cluster. It cycles between 2 conformational states during catalysis to transfer electrons from the quinol bound in the Q(0) site in cytochrome b to cytochrome c1. Incorporation of UQCRFS1 is the penultimate step in complex III assembly. Functionally, component of the ubiquinol-cytochrome c oxidoreductase (cytochrome b-c1 complex, complex III, CIII). UQCRFS1 undergoes proteolytic processing once it is incorporated in the complex III dimer. One of the fragments, called subunit 9, corresponds to its mitochondrial targeting sequence (MTS). The proteolytic processing is necessary for the correct insertion of UQCRFS1 in the complex III dimer, but the persistence of UQCRFS1-derived fragments may prevent newly imported UQCRFS1 to be processed and assembled into complex III and is detrimental for the complex III structure and function. This Theropithecus gelada (Gelada baboon) protein is Cytochrome b-c1 complex subunit Rieske, mitochondrial (UQCRFS1).